We begin with the raw amino-acid sequence, 368 residues long: Probable leucine aminopeptidase ARB_03492 (368 aa).

The first 18 residues, Met1–Ala18, serve as a signal peptide directing secretion. An N-linked (GlcNAc...) asparagine glycan is attached at Asn92. Residues His172 and Asp191 each coordinate Zn(2+). 2 N-linked (GlcNAc...) asparagine glycosylation sites follow: Asn192 and Asn216. Residues Glu230 and Asp257 each contribute to the Zn(2+) site. Cys301 and Cys305 are disulfide-bonded. His334 is a Zn(2+) binding site.

Belongs to the peptidase M28 family. M28E subfamily. Monomer. Zn(2+) is required as a cofactor.

The protein resides in the secreted. In terms of biological role, probable extracellular aminopeptidase which contributes to pathogenicity. The polypeptide is Probable leucine aminopeptidase ARB_03492 (Arthroderma benhamiae (strain ATCC MYA-4681 / CBS 112371) (Trichophyton mentagrophytes)).